The chain runs to 235 residues: Protein YIP4 (235 aa).

5 helical membrane passes run 89 to 109 (ISAN…SLFV), 114 to 134 (SLFS…ALHL), 145 to 165 (LISY…NALV), 186 to 206 (VLSL…VAAV), and 215 to 235 (IIEI…STIL).

This sequence belongs to the YIP1 family. In terms of assembly, interacts with TVP18, TVP23, YIP1 and YIP5. Interacts with SEC4, YPT1, YPT6, YPT7, YPT10, YPT11, YPT31, YPT32 and YPT52; These proteins are all Rab GTPases.

Its subcellular location is the golgi apparatus membrane. May be involved in proper membrane localization of Rab GTPases. This Saccharomyces cerevisiae (strain ATCC 204508 / S288c) (Baker's yeast) protein is Protein YIP4 (YIP4).